Here is a 415-residue protein sequence, read N- to C-terminus: Protein PIN-LIKES 4 (415 aa).

Residues 1–13 (MKLLELFIASSKP) are Lumenal-facing. Residues 14–34 (VVETLLITSVGFYLALDTVNL) traverse the membrane as a helical segment. Over 35-44 (LGHDARKHLN) the chain is Cytoplasmic. Residues 45–61 (NIVFYVFSPSLIGSRLA) traverse the membrane as a helical segment. Residues 62–75 (DSVTYESLVKMWFM) are Lumenal-facing. Residues 76 to 96 (PVNVLLTFMIGSLLGWIVIVI) traverse the membrane as a helical segment. Topologically, residues 97-106 (TKPPSQLRGL) are cytoplasmic. A helical membrane pass occupies residues 107–127 (IISCCASGNLGTMPLIIIPAI). Over 128–143 (CKEKGGPFGDSESCEK) the chain is Lumenal. Residues 144–161 (YGMGYVTLSMTAFFISVY) traverse the membrane as a helical segment. The Cytoplasmic segment spans residues 162–244 (KHDTNWYVSG…RVVSLSKKVN (83 aa)). Residues 245–265 (LGSIFAPATIAAIIALVIGLI) form a helical membrane-spanning segment. Over 266–285 (TPLRNLIIGTVAPFRVIQDS) the chain is Lumenal. Residues 286-306 (LTLLGDGAIPAMTLILGGNLL) form a helical membrane-spanning segment. Residues 307 to 322 (KGMRRSEVRSSEMKNS) are Cytoplasmic-facing. A helical membrane pass occupies residues 323–343 (CIIGVLVARYILLPVSGVLLV). Residues 344-355 (RGAYKLDLVTSE) are Lumenal-facing. The helical transmembrane segment at 356-376 (PLYQFVLLLQYAVPPAMNLGT) threads the bilayer. Topologically, residues 377 to 389 (KTQLFGAGESECS) are cytoplasmic. A helical membrane pass occupies residues 390–410 (VIMLWTYSLAAVSLTVWPTFF). The Lumenal portion of the chain corresponds to 411-415 (MWLVT).

Belongs to the auxin efflux carrier (TC 2.A.69.2) family. Expressed in seedlings, rosette and cauline leaves, stems, flowers and siliques.

It is found in the endoplasmic reticulum membrane. Functionally, involved in cellular auxin homeostasis by regulating auxin metabolism. Regulates intracellular auxin accumulation at the endoplasmic reticulum and thus auxin availability for nuclear auxin signaling. The polypeptide is Protein PIN-LIKES 4 (Arabidopsis thaliana (Mouse-ear cress)).